The following is a 590-amino-acid chain: Aspartate--tRNA(Asp/Asn) ligase (590 aa).

Residue glutamate 170 participates in L-aspartate binding. The aspartate stretch occupies residues 194 to 197; the sequence is QLFK. Arginine 216 serves as a coordination point for L-aspartate. ATP-binding positions include 216 to 218 and glutamine 225; that span reads RDE. Histidine 448 provides a ligand contact to L-aspartate. Glutamate 482 lines the ATP pocket. Arginine 489 is a binding site for L-aspartate. 534–537 is a binding site for ATP; the sequence is GWDR. A disordered region spans residues 557-590; that stretch reads SGGGADPLTGAPAPITPQQRRESGIDAKPKKDGE. The segment covering 575-590 has biased composition (basic and acidic residues); that stretch reads QRRESGIDAKPKKDGE.

This sequence belongs to the class-II aminoacyl-tRNA synthetase family. Type 1 subfamily. As to quaternary structure, homodimer.

The protein localises to the cytoplasm. The catalysed reaction is tRNA(Asx) + L-aspartate + ATP = L-aspartyl-tRNA(Asx) + AMP + diphosphate. Functionally, aspartyl-tRNA synthetase with relaxed tRNA specificity since it is able to aspartylate not only its cognate tRNA(Asp) but also tRNA(Asn). Reaction proceeds in two steps: L-aspartate is first activated by ATP to form Asp-AMP and then transferred to the acceptor end of tRNA(Asp/Asn). This is Aspartate--tRNA(Asp/Asn) ligase from Mycobacterium sp. (strain JLS).